The following is a 146-amino-acid chain: 3-hydroxyacyl-[acyl-carrier-protein] dehydratase FabZ (146 aa).

Residue histidine 49 is part of the active site.

It belongs to the thioester dehydratase family. FabZ subfamily.

It is found in the cytoplasm. It carries out the reaction a (3R)-hydroxyacyl-[ACP] = a (2E)-enoyl-[ACP] + H2O. Involved in unsaturated fatty acids biosynthesis. Catalyzes the dehydration of short chain beta-hydroxyacyl-ACPs and long chain saturated and unsaturated beta-hydroxyacyl-ACPs. This chain is 3-hydroxyacyl-[acyl-carrier-protein] dehydratase FabZ, found in Pseudomonas fluorescens (strain Pf0-1).